A 695-amino-acid chain; its full sequence is Nucleoprotein (695 aa).

2 coiled-coil regions span residues 316–341 (VNVG…RRHE) and 372–399 (QTLA…VEDQ). The disordered stretch occupies residues 424–611 (QARPMNRPTA…SPSAPQEDTR (188 aa)). Residues 438–447 (VDDKIEHEST) show a composition bias toward basic and acidic residues. 2 stretches are compositionally biased toward polar residues: residues 495–505 (RQSQDLNNSQG) and 537–552 (TTDS…SDNE). The PTAP/PSAP motif signature appears at 603–606 (PSAP).

Belongs to the filoviruses nucleoprotein family. As to quaternary structure, homooligomer. Homomultimerizes to form the nucleocapsid. Binds to viral genomic RNA. Interacts with VP35 and VP30 to form the nucleocapsid. Also interacts with VP24 and VP40. In terms of processing, phosphorylated.

The protein localises to the virion. The protein resides in the host cytoplasm. Functionally, encapsidates the genome, protecting it from nucleases. The encapsidated genomic RNA is termed the nucleocapsid and serves as template for transcription and replication. During replication, encapsidation by NP is coupled to RNA synthesis and all replicative products are resistant to nucleases. The sequence is that of Nucleoprotein (NP) from Chlorocebus aethiops (Green monkey).